The chain runs to 479 residues: Monodehydroascorbate reductase 1, peroxisomal (479 aa).

Topologically, residues 1 to 3 are cytoplasmic; that stretch reads MGR. A helical membrane pass occupies residues 4–24; sequence AFEYVILGGGVAAGYAALEFV. FAD is bound by residues 12–15, Glu41, Arg48, Lys53, and 147–148; these read GGVA and RN. Residues 25–445 are Peroxisomal-facing; sequence RRNGGASSQE…QATGGGGKPT (421 aa). NAD(+) is bound by residues 172–178, Arg202, and Gly260; that span reads GGYIGME. NADP(+) contacts are provided by residues 174–178, Arg202, and Gly260; that span reads YIGME. An FAD-binding site is contributed by Asp297. 314–315 provides a ligand contact to NAD(+); the sequence is EH. 314–315 is a binding site for NADP(+); it reads EH. Val316 is an FAD binding site. Arg320 is an L-ascorbate binding site. Residue Tyr347 coordinates FAD. Residue Tyr347 coordinates NAD(+). Tyr347 provides a ligand contact to NADP(+). Residue Arg349 coordinates L-ascorbate. Residues 446 to 466 form a helical membrane-spanning segment; the sequence is CAWHATVGVAAAVSIAAFACW. Over 467–479 the chain is Cytoplasmic; the sequence is YGWQAPYVLKRDF.

The protein belongs to the FAD-dependent oxidoreductase family. Requires FAD as cofactor.

Its subcellular location is the peroxisome membrane. The enzyme catalyses 2 monodehydro-L-ascorbate radical + NADH + H(+) = 2 L-ascorbate + NAD(+). Catalyzes the conversion of monodehydroascorbate to ascorbate, oxidizing NADH in the process. Ascorbate is a major antioxidant against reactive oxygen species (ROS) and nitric oxide (NO). The sequence is that of Monodehydroascorbate reductase 1, peroxisomal from Oryza sativa subsp. japonica (Rice).